The sequence spans 77 residues: Putative defensin-like protein 120 (77 aa).

An N-terminal signal peptide occupies residues 1-26 (MTQKATILAIFMVVLVLGLETKETQG). Intrachain disulfides connect C30–C75, C39–C60, C44–C69, and C48–C71.

The protein belongs to the DEFL family.

Its subcellular location is the secreted. The sequence is that of Putative defensin-like protein 120 (LCR56) from Arabidopsis thaliana (Mouse-ear cress).